The primary structure comprises 349 residues: Probable G-protein coupled receptor 21 (349 aa).

The Extracellular segment spans residues 1 to 32 (MNSTLDGNQSSHPFCLLAFGYLETVNFCLLEV). Asparagine 2 and asparagine 8 each carry an N-linked (GlcNAc...) asparagine glycan. Residues 33-53 (LIIVFLTVLIISGNIIVIFVF) form a helical membrane-spanning segment. Topologically, residues 54–75 (HCAPLLNHHTTSYFIQTMAYAD) are cytoplasmic. The helical transmembrane segment at 76–96 (LFVGVSCVVPSLSLLHHPLPV) threads the bilayer. Over 97 to 104 (EESLTCQI) the chain is Extracellular. A helical transmembrane segment spans residues 105-125 (FGFVVSVLKSVSMASLACISI). The Cytoplasmic segment spans residues 126 to 147 (DRYIAITKPLTYNTLVTPWRLR). A helical membrane pass occupies residues 148–168 (LCIFLIWLYSTLVFLPSFFHW). At 169–191 (GKPGYHGDVFQWCAESWHTDSYF) the chain is on the extracellular side. A helical membrane pass occupies residues 192–212 (TLFIVMMLYAPAALIVCFTYF). Over 213 to 252 (NIFRICQQHTKDISERQARFSSQSGETGEVQACPDKRYAM) the chain is Cytoplasmic. Residues 253 to 273 (VLFRITSVFYILWLPYIIYFL) traverse the membrane as a helical segment. At 274 to 283 (LESSTGHSNR) the chain is on the extracellular side. The helical transmembrane segment at 284–304 (FASFLTTWLAISNSFCNCVIY) threads the bilayer. Over 305 to 349 (SLSNSVFQRGLKRLSGAMCTSCASQTTANDPYTVRSKGPLNGCHI) the chain is Cytoplasmic.

The protein belongs to the G-protein coupled receptor 1 family. In terms of tissue distribution, not detected in the brain regions thalamus, putamen, caudate, frontal cortex, pons, hypothalamus, hippocampus.

The protein resides in the cell membrane. Its function is as follows. Orphan receptor. The chain is Probable G-protein coupled receptor 21 (GPR21) from Homo sapiens (Human).